The chain runs to 522 residues: MSNRVIIFDTTLRDGEQALAASLSVKEKLQIAMALERLGVDVMEVGFPVSSPGDFESVQTIARTIKNSRVCALSRALEKDIDAAAQALSVAEQFRIHTFISTSTIHVESKLKRSFDQVLEMAVGAVKYARRFTDDVEFSCEDAGRTPIDNLCRMVEAAILAGARTINIPDTVGYTVPSEFGNIIQTLFNRVPNIDQAVISVHCHDDLGLSVANSITAVQHGARQIECTINGIGERAGNCSLEEIAMILATRKGMLGLETGINAKEIHRTSNLVSQLCNMPVQANKAIVGANAFTHSSGIHQDGMLKAQNTYEIMTPESIGLNRNNLNMTSRSGRHVIKHRMEEMGYSEHDYNMDALYEEFLKLADKKGQVFDYDLEALAFMEAQAEEDNHYQLQQLVVQSDSTEGVATATVRIEVGGEIKTEAATGNGPVDAAYNAIARATDRRIDIISYKLGAKGVGQNALGQVDITAVYHEQNFHGVGLATDVVEASARALVHVMNLTCRADKVADYKQSMQKNRELGGV.

In terms of domain architecture, Pyruvate carboxyltransferase spans 5–267 (VIIFDTTLRD…ETGINAKEIH (263 aa)). Mn(2+) contacts are provided by D14, H202, H204, and N238. The tract at residues 392-522 (QLQQLVVQSD…MQKNRELGGV (131 aa)) is regulatory domain.

The protein belongs to the alpha-IPM synthase/homocitrate synthase family. LeuA type 1 subfamily. As to quaternary structure, homodimer. Requires Mn(2+) as cofactor.

The protein localises to the cytoplasm. The enzyme catalyses 3-methyl-2-oxobutanoate + acetyl-CoA + H2O = (2S)-2-isopropylmalate + CoA + H(+). It participates in amino-acid biosynthesis; L-leucine biosynthesis; L-leucine from 3-methyl-2-oxobutanoate: step 1/4. Its function is as follows. Catalyzes the condensation of the acetyl group of acetyl-CoA with 3-methyl-2-oxobutanoate (2-ketoisovalerate) to form 3-carboxy-3-hydroxy-4-methylpentanoate (2-isopropylmalate). The polypeptide is 2-isopropylmalate synthase (Shewanella baltica (strain OS185)).